The chain runs to 365 residues: Spore germination protein A2 (365 aa).

11 helical membrane-spanning segments follow: residues 12–32, 45–65, 85–105, 122–142, 148–168, 187–207, 223–243, 250–270, 275–295, 303–323, and 338–358; these read TFQGISIVANTMLGAGLLTLP, WITLILEGFIFIFFIYLNTLI, WIGSIIGLLICGYFLGVASFE, PIQVIILTFICCGIYLMVGGL, LFPFYLTVTIIILLIVFGISF, IANSLTVVSISFLGMEVMLFL, LGFLIPIILYILTYIIVVGAL, TLIWPTISLFQSFELKGIFIE, FLLVVWIIQFFTTFVIYGYFA, FGLSTKTSMVIIGITVFYFSL, and LGYIFVSLFLLPFILFFIVAL.

Belongs to the amino acid-polyamine-organocation (APC) superfamily. Spore germination protein (SGP) (TC 2.A.3.9) family.

It localises to the cell membrane. Its function is as follows. Involved in the germinative response to L-alanine. Could be an amino acid transporter. Forms a complex at the inner spore membrane which acts as a receptor for L-alanine, thus is involved in the stimulation of germination in response to alanine. Can stimulate germination in the absence of gerD and gerK gene products (fructose and glucose receptors, respectively), but the response is improved in their presence. The protein is Spore germination protein A2 (gerAB) of Bacillus subtilis (strain 168).